The chain runs to 556 residues: Potassium-transporting ATPase potassium-binding subunit (556 aa).

10 helical membrane passes run 5–25 (LAGI…HVPL), 65–85 (SVLA…LVQG), 133–153 (GLAV…IALV), 176–196 (IRIL…GGAI), 249–269 (PTTW…FSLP), 283–303 (YAIV…TLFF), 377–397 (AGLY…GLMV), 415–435 (LAAT…AVAM), 483–503 (ALGL…LALA), and 526–546 (FVGM…LPML).

Belongs to the KdpA family. As to quaternary structure, the system is composed of three essential subunits: KdpA, KdpB and KdpC.

The protein localises to the cell membrane. Part of the high-affinity ATP-driven potassium transport (or Kdp) system, which catalyzes the hydrolysis of ATP coupled with the electrogenic transport of potassium into the cytoplasm. This subunit binds the extracellular potassium ions and delivers the ions to the membrane domain of KdpB through an intramembrane tunnel. The sequence is that of Potassium-transporting ATPase potassium-binding subunit from Mycolicibacterium vanbaalenii (strain DSM 7251 / JCM 13017 / BCRC 16820 / KCTC 9966 / NRRL B-24157 / PYR-1) (Mycobacterium vanbaalenii).